The sequence spans 123 residues: uncharacterized protein (123 aa).

This is an uncharacterized protein from Methanocaldococcus jannaschii (strain ATCC 43067 / DSM 2661 / JAL-1 / JCM 10045 / NBRC 100440) (Methanococcus jannaschii).